We begin with the raw amino-acid sequence, 647 residues long: Zinc finger protein 567 (647 aa).

A KRAB domain is found at 32–77 (MDVMLENYCHLISVGCHMTKPDVILKLERGEEPWTSFKGHTCLEEN). Residues lysine 173, lysine 202, and lysine 217 each participate in a glycyl lysine isopeptide (Lys-Gly) (interchain with G-Cter in SUMO2) cross-link. Residues 210-232 (FEYNDCEKAFLKRGGPVTHSRTY) form a C2H2-type 1; degenerate zinc finger. 7 consecutive C2H2-type zinc fingers follow at residues 253-275 (HTCT…QGIH), 281-303 (YQCH…QRTH), 309-331 (FVCN…QRTH), 337-359 (YECP…QRTH), 365-387 (YECS…QRIH), 393-415 (YICK…QRTH), and 421-443 (YICN…EKTH). Lysine 447 is covalently cross-linked (Glycyl lysine isopeptide (Lys-Gly) (interchain with G-Cter in SUMO2)). 7 consecutive C2H2-type zinc fingers follow at residues 449–471 (YICN…QRTH), 477–499 (YECP…HRTH), 505–527 (YECN…QRIH), 533–555 (YICN…QKIH), 561–583 (YECP…QRTH), 589–611 (YKCS…QRTH), and 617–639 (YICN…QRTH).

Belongs to the krueppel C2H2-type zinc-finger protein family.

The protein localises to the nucleus. In terms of biological role, may be involved in transcriptional regulation. In Bos taurus (Bovine), this protein is Zinc finger protein 567 (ZNF567).